Here is a 206-residue protein sequence, read N- to C-terminus: Holliday junction branch migration complex subunit RuvA (206 aa).

The segment at 1-64 (MIGKLKGTLD…EDMLRLYGFQ (64 aa)) is domain I. The interval 65 to 144 (SALEREWFRL…AYAGAASGTI (80 aa)) is domain II. A flexible linker region spans residues 145 to 154 (GLKQELGEGV). The domain III stretch occupies residues 154 to 206 (VAPAPITDAVSALVNLGYSRDTAANAVAAALKTAGEDADASKLIRFGLKELAR).

It belongs to the RuvA family. As to quaternary structure, homotetramer. Forms an RuvA(8)-RuvB(12)-Holliday junction (HJ) complex. HJ DNA is sandwiched between 2 RuvA tetramers; dsDNA enters through RuvA and exits via RuvB. An RuvB hexamer assembles on each DNA strand where it exits the tetramer. Each RuvB hexamer is contacted by two RuvA subunits (via domain III) on 2 adjacent RuvB subunits; this complex drives branch migration. In the full resolvosome a probable DNA-RuvA(4)-RuvB(12)-RuvC(2) complex forms which resolves the HJ.

Its subcellular location is the cytoplasm. The RuvA-RuvB-RuvC complex processes Holliday junction (HJ) DNA during genetic recombination and DNA repair, while the RuvA-RuvB complex plays an important role in the rescue of blocked DNA replication forks via replication fork reversal (RFR). RuvA specifically binds to HJ cruciform DNA, conferring on it an open structure. The RuvB hexamer acts as an ATP-dependent pump, pulling dsDNA into and through the RuvAB complex. HJ branch migration allows RuvC to scan DNA until it finds its consensus sequence, where it cleaves and resolves the cruciform DNA. The polypeptide is Holliday junction branch migration complex subunit RuvA (Mesorhizobium japonicum (strain LMG 29417 / CECT 9101 / MAFF 303099) (Mesorhizobium loti (strain MAFF 303099))).